Here is a 660-residue protein sequence, read N- to C-terminus: MAVRELSPARCTSASPLVLARRTKLFALSEMRWAALALGLFSAGLLTQLCGAPQWVRWALFLACYATGGWEPGLAGLQALQRRTLDVDLLMVVAAIGAAAIGQIAEGALLIVIFATSGALEALVTARTADSVRGLMGLAPGTATRVGAGGGEETVNAADLRIGDIVLVRPGERISADATVLAGGSEVDQATVTGEPLPVDKSIGDQVFAGTVNGTGALRIRVDRLARDSVVARIATLVEQASQTKARTQLFIEKVEQRYSIGMVAVTLAVFAVPPLWGETLQRALLRAMTFMIVASPCAVVLATMPPLLAAIANAGRHGVLAKSAIVMEQLGTTTRIAFDKTGTLTRGTPELAGIWVYERRFTDDELLRLAAAAEYPSEHPLGAAIVKAAQSRRIRLPTVGEFTAHPGCRVTARVDGHVIAVGSATALLGTAGAAALEASMITAVDFLQGEGYTVVVVVCDSHPVGLLAITDQLRPEAAAAISAATKLTGAKPVLLTGDNRATADRLGVQVGIDDVRAGLLPDDKVAAVRQLQAGGARLTVVGDGINDAPALAAAHVGIAMGSARSELTLQTADAVVVRDDLTTIPTVIAMSRRARRIVVANLIVAVTFIAGLVVWDLAFTLPLPLGVARHEGSTIIVGLNGLRLLRHTAWRRAAGTAHR.

Transmembrane regions (helical) follow at residues 33–53, 60–80, 94–114, 261–281, and 292–312; these read WAAL…CGAP, LFLA…LQAL, AAIG…IVIF, IGMV…GETL, and MIVA…LAAI. Catalysis depends on D340, which acts as the 4-aspartylphosphate intermediate. Residues D544 and D548 each coordinate Mg(2+). The helical transmembrane segment at 598–618 threads the bilayer; the sequence is IVVANLIVAVTFIAGLVVWDL.

Belongs to the cation transport ATPase (P-type) (TC 3.A.3) family. Type IB subfamily.

It localises to the cell membrane. The catalysed reaction is ATP + H2O = ADP + phosphate + H(+). The sequence is that of Probable cation-transporting P-type ATPase J (ctpJ) from Mycobacterium tuberculosis (strain CDC 1551 / Oshkosh).